We begin with the raw amino-acid sequence, 146 residues long: D-aminoacyl-tRNA deacylase (146 aa).

Positions Gly-138–Pro-139 match the Gly-cisPro motif, important for rejection of L-amino acids motif.

The protein belongs to the DTD family. Homodimer.

It is found in the cytoplasm. The enzyme catalyses glycyl-tRNA(Ala) + H2O = tRNA(Ala) + glycine + H(+). It carries out the reaction a D-aminoacyl-tRNA + H2O = a tRNA + a D-alpha-amino acid + H(+). Its function is as follows. An aminoacyl-tRNA editing enzyme that deacylates mischarged D-aminoacyl-tRNAs. Also deacylates mischarged glycyl-tRNA(Ala), protecting cells against glycine mischarging by AlaRS. Acts via tRNA-based rather than protein-based catalysis; rejects L-amino acids rather than detecting D-amino acids in the active site. By recycling D-aminoacyl-tRNA to D-amino acids and free tRNA molecules, this enzyme counteracts the toxicity associated with the formation of D-aminoacyl-tRNA entities in vivo and helps enforce protein L-homochirality. This chain is D-aminoacyl-tRNA deacylase, found in Stenotrophomonas maltophilia (strain K279a).